The following is a 300-amino-acid chain: Homoserine kinase (300 aa).

Position 87–97 (87–97 (PISRGLGSSSA)) interacts with ATP.

Belongs to the GHMP kinase family. Homoserine kinase subfamily.

It localises to the cytoplasm. It carries out the reaction L-homoserine + ATP = O-phospho-L-homoserine + ADP + H(+). It participates in amino-acid biosynthesis; L-threonine biosynthesis; L-threonine from L-aspartate: step 4/5. Its function is as follows. Catalyzes the ATP-dependent phosphorylation of L-homoserine to L-homoserine phosphate. This Clostridium kluyveri (strain ATCC 8527 / DSM 555 / NBRC 12016 / NCIMB 10680 / K1) protein is Homoserine kinase.